Consider the following 230-residue polypeptide: Large ribosomal subunit protein uL1 (230 aa).

This sequence belongs to the universal ribosomal protein uL1 family. As to quaternary structure, part of the 50S ribosomal subunit.

Binds directly to 23S rRNA. The L1 stalk is quite mobile in the ribosome, and is involved in E site tRNA release. Its function is as follows. Protein L1 is also a translational repressor protein, it controls the translation of the L11 operon by binding to its mRNA. This is Large ribosomal subunit protein uL1 from Afipia carboxidovorans (strain ATCC 49405 / DSM 1227 / KCTC 32145 / OM5) (Oligotropha carboxidovorans).